The primary structure comprises 521 residues: Maturase K (521 aa).

Belongs to the intron maturase 2 family. MatK subfamily.

The protein resides in the plastid. Functionally, usually encoded in the trnK tRNA gene intron. Probably assists in splicing its own and other chloroplast group II introns. The protein is Maturase K of Cuscuta exaltata (Tall dodder).